We begin with the raw amino-acid sequence, 1153 residues long: ATP-dependent helicase/deoxyribonuclease subunit B (1153 aa).

The 289-residue stretch at 1-289 folds into the UvrD-like helicase ATP-binding domain; that stretch reads MELNAYIGRA…KHLEQNFNAL (289 aa). Position 8 to 15 (8 to 15) interacts with ATP; sequence GRAGTGKS. Residues 269 to 583 enclose the UvrD-like helicase C-terminal domain; sequence LDVQRFIHND…SIGTMDLAKV (315 aa). [4Fe-4S] cluster contacts are provided by C784, C1110, C1113, and C1119.

The protein belongs to the helicase family. AddB/RexB type 1 subfamily. As to quaternary structure, heterodimer of AddA and AddB. Mg(2+) is required as a cofactor. It depends on [4Fe-4S] cluster as a cofactor.

Its function is as follows. The heterodimer acts as both an ATP-dependent DNA helicase and an ATP-dependent, dual-direction single-stranded exonuclease. Recognizes the chi site generating a DNA molecule suitable for the initiation of homologous recombination. The AddB subunit has 5' -&gt; 3' nuclease activity but not helicase activity. The polypeptide is ATP-dependent helicase/deoxyribonuclease subunit B (Staphylococcus saprophyticus subsp. saprophyticus (strain ATCC 15305 / DSM 20229 / NCIMB 8711 / NCTC 7292 / S-41)).